Consider the following 265-residue polypeptide: Methyl-coenzyme M reductase II subunit gamma (265 aa).

Coenzyme M is bound at residue arginine 123.

Belongs to the methyl-coenzyme M reductase gamma subunit family. As to quaternary structure, MCR is a hexamer of two alpha, two beta, and two gamma chains, forming a dimer of heterotrimers. Requires coenzyme F430 as cofactor.

It carries out the reaction coenzyme B + methyl-coenzyme M = methane + coenzyme M-coenzyme B heterodisulfide. Its pathway is one-carbon metabolism; methyl-coenzyme M reduction; methane from methyl-coenzyme M: step 1/1. Functionally, component of the methyl-coenzyme M reductase (MCR) I that catalyzes the reductive cleavage of methyl-coenzyme M (CoM-S-CH3 or 2-(methylthio)ethanesulfonate) using coenzyme B (CoB or 7-mercaptoheptanoylthreonine phosphate) as reductant which results in the production of methane and the mixed heterodisulfide of CoB and CoM (CoM-S-S-CoB). This is the final step in methanogenesis. The polypeptide is Methyl-coenzyme M reductase II subunit gamma (mrtG) (Methanothermobacter marburgensis (strain ATCC BAA-927 / DSM 2133 / JCM 14651 / NBRC 100331 / OCM 82 / Marburg) (Methanobacterium thermoautotrophicum)).